The primary structure comprises 431 residues: Serine hydroxymethyltransferase (431 aa).

(6S)-5,6,7,8-tetrahydrofolate-binding positions include leucine 126 and 130-132 (GHL). An N6-(pyridoxal phosphate)lysine modification is found at lysine 235.

Belongs to the SHMT family. In terms of assembly, homodimer. Pyridoxal 5'-phosphate serves as cofactor.

It localises to the cytoplasm. The enzyme catalyses (6R)-5,10-methylene-5,6,7,8-tetrahydrofolate + glycine + H2O = (6S)-5,6,7,8-tetrahydrofolate + L-serine. It functions in the pathway one-carbon metabolism; tetrahydrofolate interconversion. The protein operates within amino-acid biosynthesis; glycine biosynthesis; glycine from L-serine: step 1/1. Its function is as follows. Catalyzes the reversible interconversion of serine and glycine with tetrahydrofolate (THF) serving as the one-carbon carrier. This reaction serves as the major source of one-carbon groups required for the biosynthesis of purines, thymidylate, methionine, and other important biomolecules. Also exhibits THF-independent aldolase activity toward beta-hydroxyamino acids, producing glycine and aldehydes, via a retro-aldol mechanism. In Nocardia farcinica (strain IFM 10152), this protein is Serine hydroxymethyltransferase.